The primary structure comprises 304 residues: D-alanine--D-alanine ligase (304 aa).

The ATP-grasp domain maps to 107-300 (KRLWQGSGLP…FDELVARILG (194 aa)). 134–186 (VGYPVIVKPAREGSSLGMSRVEGPEELAEAYRVAAAYDDTVLAEAWVEGEEYT) serves as a coordination point for ATP. Positions 254, 267, and 269 each coordinate Mg(2+).

This sequence belongs to the D-alanine--D-alanine ligase family. The cofactor is Mg(2+). It depends on Mn(2+) as a cofactor.

The protein resides in the cytoplasm. It carries out the reaction 2 D-alanine + ATP = D-alanyl-D-alanine + ADP + phosphate + H(+). It participates in cell wall biogenesis; peptidoglycan biosynthesis. Its function is as follows. Cell wall formation. This is D-alanine--D-alanine ligase from Halorhodospira halophila (strain DSM 244 / SL1) (Ectothiorhodospira halophila (strain DSM 244 / SL1)).